The sequence spans 415 residues: Serine hydroxymethyltransferase (415 aa).

(6S)-5,6,7,8-tetrahydrofolate-binding positions include L121 and 125 to 127 (GHL). An N6-(pyridoxal phosphate)lysine modification is found at K230.

It belongs to the SHMT family. In terms of assembly, homodimer. It depends on pyridoxal 5'-phosphate as a cofactor.

Its subcellular location is the cytoplasm. The catalysed reaction is (6R)-5,10-methylene-5,6,7,8-tetrahydrofolate + glycine + H2O = (6S)-5,6,7,8-tetrahydrofolate + L-serine. It functions in the pathway one-carbon metabolism; tetrahydrofolate interconversion. Its pathway is amino-acid biosynthesis; glycine biosynthesis; glycine from L-serine: step 1/1. In terms of biological role, catalyzes the reversible interconversion of serine and glycine with tetrahydrofolate (THF) serving as the one-carbon carrier. This reaction serves as the major source of one-carbon groups required for the biosynthesis of purines, thymidylate, methionine, and other important biomolecules. Also exhibits THF-independent aldolase activity toward beta-hydroxyamino acids, producing glycine and aldehydes, via a retro-aldol mechanism. This Syntrophomonas wolfei subsp. wolfei (strain DSM 2245B / Goettingen) protein is Serine hydroxymethyltransferase.